The following is a 182-amino-acid chain: Ribosome maturation factor RimM (182 aa).

Positions 102–182 constitute a PRC barrel domain; that stretch reads EEGDYYWKDL…TIEVDWDPGF (81 aa).

This sequence belongs to the RimM family. As to quaternary structure, binds ribosomal protein uS19.

The protein resides in the cytoplasm. Functionally, an accessory protein needed during the final step in the assembly of 30S ribosomal subunit, possibly for assembly of the head region. Essential for efficient processing of 16S rRNA. May be needed both before and after RbfA during the maturation of 16S rRNA. It has affinity for free ribosomal 30S subunits but not for 70S ribosomes. The polypeptide is Ribosome maturation factor RimM (Klebsiella pneumoniae (strain 342)).